Consider the following 270-residue polypeptide: Fibroblast growth factor 5 (270 aa).

The signal sequence occupies residues 1–20 (MSLSFLLLLFLSHLILSAWA). The segment at 26–83 (LAPKGQPGPAATGRNPAGASSSRSSRGTTSSSSSSVSSSHSASLGNQGSGLEQSSFQW) is disordered. Residues 43–68 (GASSSRSSRGTTSSSSSSVSSSHSAS) show a composition bias toward low complexity. Over residues 69-83 (LGNQGSGLEQSSFQW) the composition is skewed to polar residues. An N-linked (GlcNAc...) asparagine glycan is attached at asparagine 112. A disordered region spans residues 236 to 257 (PEKKKPPSPVKPKVPLSAPRKS).

The protein belongs to the heparin-binding growth factors family. In terms of assembly, interacts with FGFR1 and FGFR2. Affinity between fibroblast growth factors (FGFs) and their receptors is increased by heparan sulfate glycosaminoglycans that function as coreceptors. As to expression, expressed in skin.

Its subcellular location is the secreted. In terms of biological role, plays an important role in the regulation of cell proliferation and cell differentiation. Required for normal regulation of the hair growth cycle. Functions as an inhibitor of hair elongation by promoting progression from anagen, the growth phase of the hair follicle, into catagen the apoptosis-induced regression phase. The protein is Fibroblast growth factor 5 (FGF5) of Felis catus (Cat).